The following is a 179-amino-acid chain: Large ribosomal subunit protein uL5 (179 aa).

Belongs to the universal ribosomal protein uL5 family. In terms of assembly, part of the 50S ribosomal subunit; part of the 5S rRNA/L5/L18/L25 subcomplex. Contacts the 5S rRNA and the P site tRNA. Forms a bridge to the 30S subunit in the 70S ribosome.

Its function is as follows. This is one of the proteins that bind and probably mediate the attachment of the 5S RNA into the large ribosomal subunit, where it forms part of the central protuberance. In the 70S ribosome it contacts protein S13 of the 30S subunit (bridge B1b), connecting the 2 subunits; this bridge is implicated in subunit movement. Contacts the P site tRNA; the 5S rRNA and some of its associated proteins might help stabilize positioning of ribosome-bound tRNAs. This Bordetella bronchiseptica (strain ATCC BAA-588 / NCTC 13252 / RB50) (Alcaligenes bronchisepticus) protein is Large ribosomal subunit protein uL5.